We begin with the raw amino-acid sequence, 236 residues long: MAFNVTILSIFPEMFPGFLNYSLAGKALEKKIWNLEVINIRSFAKDKHSTVDDVPYGGGAGMVMRSDVVGDAVDSMLSVHKNTKFIYMTPSGTKFNQNIARELLEFPHITILCGRFEGIDQRIIDAYTPYELSIGDYILSGGEPAAMVVLDACIRLLPGVVNNTDSITEESFNYGGGVLEYPQYTRPEQWKGYKVPEVLLSGNHKKISDWRQKQSHVITKKRRPELLSGEINDKFT.

S-adenosyl-L-methionine is bound by residues G114 and 134 to 139; that span reads IGDYIL.

The protein belongs to the RNA methyltransferase TrmD family. Homodimer.

The protein localises to the cytoplasm. It catalyses the reaction guanosine(37) in tRNA + S-adenosyl-L-methionine = N(1)-methylguanosine(37) in tRNA + S-adenosyl-L-homocysteine + H(+). In terms of biological role, specifically methylates guanosine-37 in various tRNAs. This chain is tRNA (guanine-N(1)-)-methyltransferase, found in Wolbachia pipientis wMel.